Consider the following 303-residue polypeptide: MANITAQMVKELRESTGAGMMDCKKALQEAEGNMEKAVDLLREKGLSKAAKKAGRVAAEGLVAIEMNDDNTVASMVEVNSETDFVAKNEDFKVFVKDAACMALATDKEDIASLLGETHKEGITLQEVLNNRVAKIGEKLDFRRFAKVVTNGQVAGYIHGGGKIGVLVEMETEARDAKVLELGKDVAMQVAAMNPKYVSRDEVDAEYIAHETEVLTQQALNEGKPANIVEKMVKGRLEKELKEVCLLEQTFVKNPDITVKQLVADVAKAVGSDIKVVKVVRFEVGEGIQKREENFAEEVAKQLK.

The segment at 82-85 (TDFV) is involved in Mg(2+) ion dislocation from EF-Tu.

This sequence belongs to the EF-Ts family.

The protein localises to the cytoplasm. In terms of biological role, associates with the EF-Tu.GDP complex and induces the exchange of GDP to GTP. It remains bound to the aminoacyl-tRNA.EF-Tu.GTP complex up to the GTP hydrolysis stage on the ribosome. This Clostridioides difficile (strain 630) (Peptoclostridium difficile) protein is Elongation factor Ts.